The sequence spans 452 residues: SAGA complex/transcription factor TFIID complex subunit Taf6 (452 aa).

Positions 4–68 (TVWNIESIKD…TSADISSALR (65 aa)) constitute a Histone-fold domain.

The protein belongs to the TAF6 family. Component of the 1.8 MDa SAGA (Spt-Ada-Gcn5 acetyltransferase) complex, which is composed of 19 subunits tra1, spt7, taf5, ngg1/ada3, sgf73, spt20, spt8, taf12, taf6, hfi1/ada1, ubp8, gcn5, ada2, spt3, sgf29, taf10, taf9, sgf11 and sus1. The SAGA complex is composed of 4 modules, namely the HAT (histone acetyltransferase) module (gcn5, ada2, ngg1/ada3 and sgf29), the DUB (deubiquitinating) module (ubp8, sgf11, sgf73 and sus1), the core or TAF (TBP-associated factor) module (taf5, taf6, taf9, taf10 and taf12), and the Tra1 or SPT (Suppressor of Ty) module (tra1, hfi1/ada1, spt3, spt7, spt8 and spt20). The Tra1/SPT module binds activators, the core module recruits TBP (TATA-binding protein), the HAT module contains the histone H3 acetyltransferase gcn5, and the DUB module comprises the histone H2B deubiquitinase ubp8. Interacts with gcn5, taf5 and taf73. Component of the 1.2 MDa TFIID complex, which is composed of TATA-binding protein (TBP) and the 14 TBP-associated factors (TAFs). It comprises 1 copy of each taf1, taf2, taf3, taf7, taf8, taf11, taf13, 2 copies of each taf4, taf5, taf6, taf9, taf10, taf12, and 3 copies of taf14. In TFIID, taf6 heterodimerizes with taf9, forming ultimately an octamer consisting of a taf6-taf9 heterotetramer core flanked by taf4-taf12 dimers on either side, similar to the histone H2A-H2B-H3-H4 octamer.

The protein localises to the nucleus. Functionally, functions as a component of both the DNA-binding general transcription initiation factor complex TFIID and the transcription coactivator SAGA complex. Binding of TFIID to a promoter (with or without TATA element) is the initial step in pre-initiation complex (PIC) formation. TFIID plays a key role in the regulation of gene expression by RNA polymerase II through different activities such as transcription activator interaction, core promoter recognition and selectivity, TFIIA and TFIIB interaction, chromatin modification (histone acetylation by TAF1), facilitation of DNA opening and initiation of transcription. SAGA acts as a general cofactor required for essentially all RNA polymerase II transcription. At the promoters, SAGA is required for transcription pre-initiation complex (PIC) recruitment. It influences RNA polymerase II transcriptional activity through different activities such as TBP interaction (via core/TAF module) and promoter selectivity, interaction with transcription activators (via Tra1/SPT module), and chromatin modification through histone acetylation (via HAT module) and deubiquitination (via DUB module). SAGA preferentially acetylates histones H3 (to form H3K9ac, H3K14ac, H3K18ac and H3K23ac) and H2B and deubiquitinates histone H2B. SAGA interacts with DNA via upstream activating sequences (UASs). This chain is SAGA complex/transcription factor TFIID complex subunit Taf6, found in Schizosaccharomyces pombe (strain 972 / ATCC 24843) (Fission yeast).